We begin with the raw amino-acid sequence, 520 residues long: Amine oxidase [flavin-containing] B (520 aa).

Ser2 carries the post-translational modification N-acetylserine. At 2–489 the chain is on the cytoplasmic side; that stretch reads SGKCDVVVVG…TFLERHLPSV (488 aa). Residue Lys52 is modified to N6-acetyllysine. Position 397 is an S-8alpha-FAD cysteine (Cys397). A helical; Anchor for type IV membrane protein membrane pass occupies residues 490 to 516; that stretch reads PGLLRLIGLTAIFSATALGVLAHKRGL. Topologically, residues 517–520 are mitochondrial intermembrane; the sequence is LVRV.

This sequence belongs to the flavin monoamine oxidase family. Monomer, homo- or heterodimer (containing two subunits of similar size). Each subunit contains a covalently bound flavin. Enzymatically active as monomer. FAD is required as a cofactor.

It is found in the mitochondrion outer membrane. It catalyses the reaction a secondary aliphatic amine + O2 + H2O = a primary amine + an aldehyde + H2O2. The enzyme catalyses (R)-adrenaline + O2 + H2O = (R)-3,4-dihydroxymandelaldehyde + methylamine + H2O2. The catalysed reaction is a primary methyl amine + O2 + H2O = an aldehyde + H2O2 + NH4(+). It carries out the reaction benzylamine + O2 + H2O = benzaldehyde + H2O2 + NH4(+). It catalyses the reaction dopamine + O2 + H2O = 3,4-dihydroxyphenylacetaldehyde + H2O2 + NH4(+). The enzyme catalyses tyramine + O2 + H2O = (4-hydroxyphenyl)acetaldehyde + H2O2 + NH4(+). The catalysed reaction is (R)-noradrenaline + O2 + H2O = (R)-3,4-dihydroxymandelaldehyde + H2O2 + NH4(+). It carries out the reaction 2-phenylethylamine + O2 + H2O = 2-phenylacetaldehyde + H2O2 + NH4(+). It catalyses the reaction N-acetylputrescine + O2 + H2O = 4-acetamidobutanal + H2O2 + NH4(+). Functionally, catalyzes the oxidative deamination of primary and some secondary amines such as neurotransmitters, and exogenous amines including the tertiary amine, neurotoxin 1-methyl-4-phenyl-1,2,3,6-tetrahydropyridine (MPTP), with concomitant reduction of oxygen to hydrogen peroxide and participates in the metabolism of neuroactive and vasoactive amines in the central nervous system and peripheral tissues. Preferentially degrades benzylamine and phenylethylamine. This Canis lupus familiaris (Dog) protein is Amine oxidase [flavin-containing] B.